Reading from the N-terminus, the 158-residue chain is Small ribosomal subunit protein uS9 (158 aa).

The protein belongs to the universal ribosomal protein uS9 family.

The protein is Small ribosomal subunit protein uS9 of Nitrobacter winogradskyi (strain ATCC 25391 / DSM 10237 / CIP 104748 / NCIMB 11846 / Nb-255).